Here is a 383-residue protein sequence, read N- to C-terminus: E3 ubiquitin-protein ligase SPL2 (383 aa).

At 1–14 the chain is on the cytoplasmic side; the sequence is MSSPERALLNLLTD. A helical membrane pass occupies residues 15 to 35; that stretch reads IALSFDGAILGLTLAVSAVGS. Residues 36–269 lie on the Chloroplast intermembrane side of the membrane; it reads ALKYASTNAA…MIEDLMEQTN (234 aa). The helical transmembrane segment at 270-290 threads the bilayer; sequence FIFLGSVILGIVSVGILSYAA. At 291–383 the chain is on the cytoplasmic side; the sequence is VRTWNKWKQW…IRGSMRVYYS (93 aa). The RING-type zinc finger occupies 331 to 370; the sequence is CVICVSRRRVPAFIPCGHVVCCRRCASTVERELNPKCPVC.

It localises to the plastid. Its subcellular location is the chloroplast outer membrane. It carries out the reaction S-ubiquitinyl-[E2 ubiquitin-conjugating enzyme]-L-cysteine + [acceptor protein]-L-lysine = [E2 ubiquitin-conjugating enzyme]-L-cysteine + N(6)-ubiquitinyl-[acceptor protein]-L-lysine.. Its pathway is protein modification; protein ubiquitination. Functionally, possesses E3 ubiquitin-protein ligase activity. The sequence is that of E3 ubiquitin-protein ligase SPL2 from Arabidopsis thaliana (Mouse-ear cress).